A 440-amino-acid chain; its full sequence is Beta-1,3-galactosyl-O-glycosyl-glycoprotein beta-1,6-N-acetylglucosaminyltransferase (440 aa).

Over 1-9 the chain is Cytoplasmic; the sequence is MKMAGWKKK. The chain crosses the membrane as a helical; Signal-anchor for type II membrane protein span at residues 10 to 30; sequence LCPGHHLWALGCYMLLAVVSL. Over 31–440 the chain is Lumenal; that stretch reads RLSLRFKCDV…RHKAIYGTEL (410 aa). Asparagine 72 and asparagine 108 each carry an N-linked (GlcNAc...) asparagine; by host glycan. Disulfide bonds link cysteine 73/cysteine 230, cysteine 164/cysteine 384, cysteine 185/cysteine 212, and cysteine 393/cysteine 425.

This sequence belongs to the glycosyltransferase 14 family.

It localises to the host Golgi apparatus membrane. The catalysed reaction is a 3-O-[beta-D-galactosyl-(1-&gt;3)-N-acetyl-alpha-D-galactosaminyl]-L-seryl-[protein] + UDP-N-acetyl-alpha-D-glucosamine = 3-O-{beta-D-galactosyl-(1-&gt;3)-[N-acetyl-beta-D-glucosaminyl-(1-&gt;6)]-N-acetyl-alpha-D-galactosaminyl}-L-seryl-[protein] + UDP + H(+). The enzyme catalyses a 3-O-[beta-D-galactosyl-(1-&gt;3)-N-acetyl-alpha-D-galactosaminyl]-L-threonyl-[protein] + UDP-N-acetyl-alpha-D-glucosamine = a 3-O-{beta-D-galactosyl-(1-&gt;3)-[N-acetyl-beta-D-glucosaminyl-(1-&gt;6)]-N-acetyl-alpha-D-galactosaminyl}-L-threonyl-[protein] + UDP + H(+). It catalyses the reaction a beta-D-Gal-(1-&gt;4)-beta-D-GlcNAc-(1-&gt;3)-beta-D-Gal-(1-&gt;4)-beta-D-GlcNAc derivative + UDP-N-acetyl-alpha-D-glucosamine = a beta-D-Gal-(1-&gt;4)-beta-D-GlcNAc-(1-&gt;3)-[beta-D-GlcNAc-(1-&gt;6)]-beta-D-Gal-(1-&gt;4)-N-acetyl-beta-D-glucosaminyl derivative + UDP + H(+). It carries out the reaction 3-O-[N-acetyl-beta-D-glucosaminyl-(1-&gt;3)-N-acetyl-alpha-D-galactosaminyl]-L-seryl-[protein] + UDP-N-acetyl-alpha-D-glucosamine = 3-O-[N-acetyl-beta-D-glucosaminyl-(1-&gt;3)-[N-acetyl-beta-D-glucosaminyl-(1-&gt;6)]-N-acetyl-alpha-D-galactosaminyl]-L-seryl-[protein] + UDP + H(+). The catalysed reaction is a 3-O-[N-acetyl-beta-D-glucosaminyl-(1-&gt;3)-N-acetyl-alpha-D-galactosaminyl]-L-threonyl-[protein] + UDP-N-acetyl-alpha-D-glucosamine = 3-O-[N-acetyl-beta-D-glucosaminyl-(1-&gt;3)-[N-acetyl-beta-D-glucosaminyl-(1-&gt;6)]-N-acetyl-alpha-D-galactosaminyl]-L-threonyl-[protein] + UDP + H(+). It participates in protein modification; protein glycosylation. Its function is as follows. Non-essential glycosyltransferase that can synthesize all known mucin beta 6 N-acetylglucosaminides. Mediates core 2 and core 4 O-glycan branching, 2 important steps in mucin-type biosynthesis. Has also I-branching enzyme activity by converting linear into branched poly-N-acetyllactosaminoglycans. Contributes to the post-translational modifications of structural proteins. The polypeptide is Beta-1,3-galactosyl-O-glycosyl-glycoprotein beta-1,6-N-acetylglucosaminyltransferase (Bo17) (Bovine herpesvirus 4 (strain V. test) (BoHV-4)).